The sequence spans 301 residues: 5'-3' exonuclease (301 aa).

The 83-residue stretch at 182-264 folds into the 5'-3' exonuclease domain; the sequence is GYADLALLRG…RVAADVPLPD (83 aa).

Functionally, 5'-3' exonuclease acting preferentially on double-stranded DNA. In Streptomyces coelicolor (strain ATCC BAA-471 / A3(2) / M145), this protein is 5'-3' exonuclease.